A 126-amino-acid polypeptide reads, in one-letter code: Large ribosomal subunit protein bL12 (126 aa).

It belongs to the bacterial ribosomal protein bL12 family. As to quaternary structure, homodimer. Part of the ribosomal stalk of the 50S ribosomal subunit. Forms a multimeric L10(L12)X complex, where L10 forms an elongated spine to which 2 to 4 L12 dimers bind in a sequential fashion. Binds GTP-bound translation factors.

In terms of biological role, forms part of the ribosomal stalk which helps the ribosome interact with GTP-bound translation factors. Is thus essential for accurate translation. The protein is Large ribosomal subunit protein bL12 of Bifidobacterium longum subsp. infantis (strain ATCC 15697 / DSM 20088 / JCM 1222 / NCTC 11817 / S12).